Here is a 238-residue protein sequence, read N- to C-terminus: Dolichyldiphosphatase 1 (238 aa).

The next 4 membrane-spanning stretches (helical) occupy residues 33-53 (LAYLSLGPVFVIVGFVTLIIF), 100-120 (PSSHSQFMWFFSVYSFLFLYL), 130-150 (FLDLLWRHVLSLGLLAAAFLV), and 162-182 (WSQVLYGGIAGGLMAVAWFIF).

The protein belongs to the dolichyldiphosphatase family.

It is found in the endoplasmic reticulum membrane. It catalyses the reaction a di-trans,poly-cis-dolichyl diphosphate + H2O = a di-trans,poly-cis-dolichyl phosphate + phosphate + H(+). It functions in the pathway protein modification; protein glycosylation. Functionally, required for efficient N-glycosylation. Necessary for maintaining optimal levels of dolichol-linked oligosaccharides. Hydrolyzes dolichyl pyrophosphate at a very high rate and dolichyl monophosphate at a much lower rate. Does not act on phosphatidate. In Plecturocebus moloch (Dusky titi monkey), this protein is Dolichyldiphosphatase 1 (DOLPP1).